A 392-amino-acid chain; its full sequence is Branched-chain-amino-acid aminotransferase, mitochondrial (392 aa).

The N-terminal 27 residues, 1 to 27, are a transit peptide targeting the mitochondrion; sequence MAAAALGQIWARKFLSVPWLLCGPRRY. Tyrosine 168 contributes to the substrate binding site. At lysine 229 the chain carries N6-(pyridoxal phosphate)lysine. An N6-acetyllysine modification is found at lysine 321.

This sequence belongs to the class-IV pyridoxal-phosphate-dependent aminotransferase family. Homodimer. It depends on pyridoxal 5'-phosphate as a cofactor.

The protein localises to the mitochondrion. It carries out the reaction L-leucine + 2-oxoglutarate = 4-methyl-2-oxopentanoate + L-glutamate. The catalysed reaction is L-isoleucine + 2-oxoglutarate = (S)-3-methyl-2-oxopentanoate + L-glutamate. The enzyme catalyses L-valine + 2-oxoglutarate = 3-methyl-2-oxobutanoate + L-glutamate. In terms of biological role, catalyzes the first reaction in the catabolism of the essential branched chain amino acids leucine, isoleucine, and valine. May also function as a transporter of branched chain alpha-keto acids. This is Branched-chain-amino-acid aminotransferase, mitochondrial (BCAT2) from Pongo abelii (Sumatran orangutan).